A 276-amino-acid polypeptide reads, in one-letter code: Large ribosomal subunit protein uL2 (276 aa).

Disordered stretches follow at residues Arg-14–His-58 and Pro-219–Lys-276. Polar residues predominate over residues Ala-16–Ser-27. A compositionally biased stretch (basic residues) spans Arg-255–Lys-276.

The protein belongs to the universal ribosomal protein uL2 family. As to quaternary structure, part of the 50S ribosomal subunit. Forms a bridge to the 30S subunit in the 70S ribosome.

Functionally, one of the primary rRNA binding proteins. Required for association of the 30S and 50S subunits to form the 70S ribosome, for tRNA binding and peptide bond formation. It has been suggested to have peptidyltransferase activity; this is somewhat controversial. Makes several contacts with the 16S rRNA in the 70S ribosome. This is Large ribosomal subunit protein uL2 from Bifidobacterium longum (strain DJO10A).